The following is a 67-amino-acid chain: Large ribosomal subunit protein bL35 (67 aa).

A disordered region spans residues 1–20 (MPKLKTKSGAKKRFVPKKSG).

Belongs to the bacterial ribosomal protein bL35 family.

The protein is Large ribosomal subunit protein bL35 of Anaeromyxobacter dehalogenans (strain 2CP-1 / ATCC BAA-258).